A 219-amino-acid polypeptide reads, in one-letter code: Large ribosomal subunit protein uL16 (219 aa).

The protein belongs to the universal ribosomal protein uL16 family. In terms of assembly, component of the large ribosomal subunit. Mature ribosomes consist of a small (40S) and a large (60S) subunit. The 40S subunit contains about 33 different proteins and 1 molecule of RNA (18S). The 60S subunit contains about 49 different proteins and 3 molecules of RNA (28S, 5.8S and 5S).

This chain is Large ribosomal subunit protein uL16 (RpL10), found in Bombyx mandarina (Wild silk moth).